The sequence spans 124 residues: UPF0482 protein YpsIP31758_1865 (124 aa).

Residues 1–32 (MMKINNLPRLIRTFLPATLLMLPLVWQTPALA) form the signal peptide. The segment at 47-68 (GGNNDPMSKEQARQSQQQWDET) is disordered.

The protein belongs to the UPF0482 family.

The polypeptide is UPF0482 protein YpsIP31758_1865 (Yersinia pseudotuberculosis serotype O:1b (strain IP 31758)).